The sequence spans 452 residues: Bifunctional protein GlmU (452 aa).

The segment at 1-225 (MDVVILAAGL…ENELIGINTR (225 aa)) is pyrophosphorylase. UDP-N-acetyl-alpha-D-glucosamine contacts are provided by residues 6–9 (LAAG), lysine 20, glutamine 71, and 76–77 (GT). Aspartate 99 is a Mg(2+) binding site. The UDP-N-acetyl-alpha-D-glucosamine site is built by glycine 136, glutamate 151, asparagine 166, and asparagine 223. Residue asparagine 223 coordinates Mg(2+). The segment at 226-246 (AELSLAMRYLRDRIVKGWMEK) is linker. An N-acetyltransferase region spans residues 247 to 452 (GITFYDPALV…LGWAKKKRKQ (206 aa)). UDP-N-acetyl-alpha-D-glucosamine-binding residues include arginine 329 and lysine 347. The active-site Proton acceptor is the histidine 359. UDP-N-acetyl-alpha-D-glucosamine contacts are provided by tyrosine 362 and asparagine 373. Residues alanine 376, 382–383 (NY), serine 401, alanine 419, and arginine 436 each bind acetyl-CoA.

In the N-terminal section; belongs to the N-acetylglucosamine-1-phosphate uridyltransferase family. It in the C-terminal section; belongs to the transferase hexapeptide repeat family. Homotrimer. Mg(2+) serves as cofactor.

It is found in the cytoplasm. The catalysed reaction is alpha-D-glucosamine 1-phosphate + acetyl-CoA = N-acetyl-alpha-D-glucosamine 1-phosphate + CoA + H(+). The enzyme catalyses N-acetyl-alpha-D-glucosamine 1-phosphate + UTP + H(+) = UDP-N-acetyl-alpha-D-glucosamine + diphosphate. It functions in the pathway nucleotide-sugar biosynthesis; UDP-N-acetyl-alpha-D-glucosamine biosynthesis; N-acetyl-alpha-D-glucosamine 1-phosphate from alpha-D-glucosamine 6-phosphate (route II): step 2/2. It participates in nucleotide-sugar biosynthesis; UDP-N-acetyl-alpha-D-glucosamine biosynthesis; UDP-N-acetyl-alpha-D-glucosamine from N-acetyl-alpha-D-glucosamine 1-phosphate: step 1/1. The protein operates within bacterial outer membrane biogenesis; LPS lipid A biosynthesis. Functionally, catalyzes the last two sequential reactions in the de novo biosynthetic pathway for UDP-N-acetylglucosamine (UDP-GlcNAc). The C-terminal domain catalyzes the transfer of acetyl group from acetyl coenzyme A to glucosamine-1-phosphate (GlcN-1-P) to produce N-acetylglucosamine-1-phosphate (GlcNAc-1-P), which is converted into UDP-GlcNAc by the transfer of uridine 5-monophosphate (from uridine 5-triphosphate), a reaction catalyzed by the N-terminal domain. This chain is Bifunctional protein GlmU, found in Thermodesulfovibrio yellowstonii (strain ATCC 51303 / DSM 11347 / YP87).